A 600-amino-acid chain; its full sequence is Fructan 1-exohydrolase (600 aa).

The signal sequence occupies residues 1-27 (MAQAWAFLLPVLFFGSYVTNLFLPTYA). Asp-73 is a catalytic residue. Residues Asn-166, Asn-234, and Asn-246 are each glycosylated (N-linked (GlcNAc...) asparagine). Cysteines 444 and 490 form a disulfide. Asn-565 carries N-linked (GlcNAc...) asparagine glycosylation.

Belongs to the glycosyl hydrolase 32 family.

It catalyses the reaction Hydrolysis of terminal, non-reducing (2-&gt;1)-linked beta-D-fructofuranose residues in fructans.. With respect to regulation, inhibited by sucrose. In terms of biological role, hydrolyzes inulin-type beta-(2,1)-fructans. May play a role as a beta-(2,1)-trimmer during graminan biosynthesis. The protein is Fructan 1-exohydrolase of Leymus chinensis (Chinese lyme grass).